The sequence spans 356 residues: Glutamine synthetase PR-1 (356 aa).

The region spanning 19–99 (VIAEYIWIGG…VICDAYTPAG (81 aa)) is the GS beta-grasp domain. Residues 41-64 (PGPVKNPSELPKWNYDGSSTGQAP) are disordered. In terms of domain architecture, GS catalytic spans 106 to 356 (KRHNAAKIFS…IADTTILWKP (251 aa)).

Belongs to the glutamine synthetase family. As to quaternary structure, homooctamer. In terms of tissue distribution, roots.

The protein localises to the cytoplasm. It carries out the reaction L-glutamate + NH4(+) + ATP = L-glutamine + ADP + phosphate + H(+). This chain is Glutamine synthetase PR-1, found in Phaseolus vulgaris (Kidney bean).